The primary structure comprises 140 residues: Non-specific lipid transfer protein GPI-anchored 33 (140 aa).

An N-terminal signal peptide occupies residues 1-27 (MAYTNKVTISAAVATMMLFLAVTIVDA). Intrachain disulfides connect Cys40/Cys80, Cys52/Cys64, Cys65/Cys104, and Cys78/Cys112. An N-linked (GlcNAc...) asparagine glycan is attached at Asn91. Residue Gly115 is the site of GPI-anchor amidated glycine attachment. A propeptide spans 116–140 (DASGGSTNKIAASMVLLGLVASLFF) (removed in mature form).

Belongs to the plant LTP family.

Its subcellular location is the cell membrane. In terms of biological role, probable lipid transfer protein. This is Non-specific lipid transfer protein GPI-anchored 33 from Arabidopsis thaliana (Mouse-ear cress).